Consider the following 304-residue polypeptide: E3 ubiquitin-protein ligase BOI (304 aa).

The tract at residues 178–214 is WRD domain; sequence LQERVKSLYVENQIWRDIAQTNEANANTLRTNLDQVL. A coiled-coil region spans residues 197 to 220; sequence QTNEANANTLRTNLDQVLAQLETF. Residues 254-291 form an RING-type zinc finger; that stretch reads CKRCGEREASVLVLPCRHLCLCTVCGGSALLRTCPVCD.

As to quaternary structure, interacts with MYB108/BOS1 and the DELLA proteins GAI, RGA, RGL1, RGL2 and RGL3. As to expression, expressed in leaves, siliques, roots, flowering tissues and stigma tips.

The protein localises to the nucleus. The catalysed reaction is S-ubiquitinyl-[E2 ubiquitin-conjugating enzyme]-L-cysteine + [acceptor protein]-L-lysine = [E2 ubiquitin-conjugating enzyme]-L-cysteine + N(6)-ubiquitinyl-[acceptor protein]-L-lysine.. It participates in protein degradation; proteasomal ubiquitin-dependent pathway. Its function is as follows. E3 ubiquitin-protein ligase involved in the regulation of pathogen and abiotic stress responses by facilitating degradation of MYB108/BOI. Attenuates cell death by preventing caspase activation. Has no effect on the stability of the DELLA proteins. Not regulated by MYB108/BOI. This Arabidopsis thaliana (Mouse-ear cress) protein is E3 ubiquitin-protein ligase BOI (BOI).